Reading from the N-terminus, the 122-residue chain is Large ribosomal subunit protein uL14 (122 aa).

This sequence belongs to the universal ribosomal protein uL14 family. In terms of assembly, part of the 50S ribosomal subunit. Forms a cluster with proteins L3 and L19. In the 70S ribosome, L14 and L19 interact and together make contacts with the 16S rRNA in bridges B5 and B8.

Binds to 23S rRNA. Forms part of two intersubunit bridges in the 70S ribosome. The protein is Large ribosomal subunit protein uL14 of Ureaplasma parvum serovar 3 (strain ATCC 27815 / 27 / NCTC 11736).